We begin with the raw amino-acid sequence, 121 residues long: Large ribosomal subunit protein uL18 (121 aa).

The protein belongs to the universal ribosomal protein uL18 family. As to quaternary structure, part of the 50S ribosomal subunit; part of the 5S rRNA/L5/L18/L25 subcomplex. Contacts the 5S and 23S rRNAs.

Its function is as follows. This is one of the proteins that bind and probably mediate the attachment of the 5S RNA into the large ribosomal subunit, where it forms part of the central protuberance. This is Large ribosomal subunit protein uL18 from Streptococcus thermophilus (strain CNRZ 1066).